A 1105-amino-acid chain; its full sequence is Carbamoyl phosphate synthase large chain (1105 aa).

The tract at residues 1–402 (MPKRDDIEKV…ALGKAVRSLE (402 aa)) is carboxyphosphate synthetic domain. Residues Arg129, Arg169, Gly175, Gly176, Lys208, Val210, Glu215, Gly241, Ile242, His243, Gln285, and Glu299 each contribute to the ATP site. One can recognise an ATP-grasp 1 domain in the interval 133 to 328 (KTAMKNCGLE…IAKISALLAV (196 aa)). 3 residues coordinate Mg(2+): Gln285, Glu299, and Asn301. Positions 285, 299, and 301 each coordinate Mn(2+). The tract at residues 403 to 542 (LDIAPKLDLR…STYNGMENET (140 aa)) is oligomerization domain. Residues 543-945 (IPSKRRKIMV…AFAKAQLSAD (403 aa)) are carbamoyl phosphate synthetic domain. The 192-residue stretch at 667-858 (AKFLKQSGLS…VAKIAAKTII (192 aa)) folds into the ATP-grasp 2 domain. ATP-binding residues include Arg703, Lys742, Leu744, Glu749, Gly774, Ile775, His776, Ser777, Gln817, and Glu829. Residues Gln817, Glu829, and Asn831 each contribute to the Mg(2+) site. Mn(2+)-binding residues include Gln817, Glu829, and Asn831. In terms of domain architecture, MGS-like spans 940–1101 (AQLSADGIST…QDIFYAQQNT (162 aa)). The segment at 946-1105 (GISTKSLLVT…YAQQNTLLKK (160 aa)) is allosteric domain.

It belongs to the CarB family. As to quaternary structure, composed of two chains; the small (or glutamine) chain promotes the hydrolysis of glutamine to ammonia, which is used by the large (or ammonia) chain to synthesize carbamoyl phosphate. Tetramer of heterodimers (alpha,beta)4. Mg(2+) serves as cofactor. The cofactor is Mn(2+).

The catalysed reaction is hydrogencarbonate + L-glutamine + 2 ATP + H2O = carbamoyl phosphate + L-glutamate + 2 ADP + phosphate + 2 H(+). It catalyses the reaction hydrogencarbonate + NH4(+) + 2 ATP = carbamoyl phosphate + 2 ADP + phosphate + 2 H(+). It participates in amino-acid biosynthesis; L-arginine biosynthesis; carbamoyl phosphate from bicarbonate: step 1/1. The protein operates within pyrimidine metabolism; UMP biosynthesis via de novo pathway; (S)-dihydroorotate from bicarbonate: step 1/3. Its function is as follows. Large subunit of the glutamine-dependent carbamoyl phosphate synthetase (CPSase). CPSase catalyzes the formation of carbamoyl phosphate from the ammonia moiety of glutamine, carbonate, and phosphate donated by ATP, constituting the first step of 2 biosynthetic pathways, one leading to arginine and/or urea and the other to pyrimidine nucleotides. The large subunit (synthetase) binds the substrates ammonia (free or transferred from glutamine from the small subunit), hydrogencarbonate and ATP and carries out an ATP-coupled ligase reaction, activating hydrogencarbonate by forming carboxy phosphate which reacts with ammonia to form carbamoyl phosphate. The sequence is that of Carbamoyl phosphate synthase large chain from Pseudothermotoga lettingae (strain ATCC BAA-301 / DSM 14385 / NBRC 107922 / TMO) (Thermotoga lettingae).